We begin with the raw amino-acid sequence, 313 residues long: Probable cell division protein WhiA (313 aa).

Residues 277-311 (SLKEVAAQVPDGPISKSGVNHRFQKIREMAQQLKE) constitute a DNA-binding region (H-T-H motif).

Belongs to the WhiA family.

Involved in cell division and chromosome segregation. The sequence is that of Probable cell division protein WhiA from Lactobacillus gasseri (strain ATCC 33323 / DSM 20243 / BCRC 14619 / CIP 102991 / JCM 1131 / KCTC 3163 / NCIMB 11718 / NCTC 13722 / AM63).